The primary structure comprises 403 residues: TBC1 domain family member 20 (403 aa).

The disordered stretch occupies residues 1–25 (MALRSAQGDGPTSGHWDGGAEKADF). The Rab-GAP TBC domain maps to 60–246 (LLTDEIRRKV…RLYDFFLACH (187 aa)). 2 helical membrane-spanning segments follow: residues 238 to 258 (LYDFFLACHPLMPIYFAAVIV) and 367 to 387 (FVKLAVMGLTVALGAAALAVV).

(Microbial infection) Directly interacts with the N-terminal amphipathic helix of hepatitis C virus (HCV) NS5A.

It is found in the membrane. Its function is as follows. GTPase-activating protein (GAP) specific for Rab1 and Rab2 small GTPase families for which it can accelerate the intrinsic GTP hydrolysis rate by more than five orders of magnitude. Also shows GAP activity for RAB18 GTPase. Promotes RAB18 dissociation from the endoplasmic reticulum (ER) membrane into the cytosol, probably through stimulating RAB18 GTP-hydrolysis. Involved in maintaining endoplasmic reticulum structure. This chain is TBC1 domain family member 20, found in Homo sapiens (Human).